Reading from the N-terminus, the 148-residue chain is D108-specific protein (148 aa).

The signal sequence occupies residues 1-24 (MKKSKLLISTIISLFVLTASSVNH).

Its function is as follows. Probably allows the phage to grow in a different host or environment or alteration of the cell wall or membrane. The protein is D108-specific protein (ges) of Escherichia phage D108 (Bacteriophage D108).